The chain runs to 391 residues: MLDTGELRERFQQHYGIHPHVIVRAPGRVNLIGEHTDYNDGFVFPVAIDRATCVAARPRTDRIVRVMAADLHDEDLFSIDQIERSNRAWHNYIRGVVLALRTAGHTLSGADMLIASDVPRGAGLSSSAALEVAVAYTFQVLNRLNILGEELALLAQGAENTFVGVQCGIMDQLIAVFGRADHALLIDCRDLTYRAVPLPPSVAVVVCDSHIARTLAASAYNQRRQECDAAVRALQQWYPGIRALRDVSEDQLAAHQHELPEPLRARARHVVSENRRALQGAAALEAGDIATFGRLMNESHASLRDDYQVSLPDIDFLVTTAQSLAGCYGSRLTGAGFGGCTVSLVERSSVETFRHDLAQAYHDATGRTATIYVCRASDGVGRVMDNARPQE.

Substrate is bound at residue 34-37; that stretch reads EHTD. 121 to 127 serves as a coordination point for ATP; it reads GAGLSSS. Residues serine 127 and glutamate 159 each coordinate Mg(2+). The Proton acceptor role is filled by aspartate 171. Residue tyrosine 220 coordinates substrate.

The protein belongs to the GHMP kinase family. GalK subfamily.

It is found in the cytoplasm. It carries out the reaction alpha-D-galactose + ATP = alpha-D-galactose 1-phosphate + ADP + H(+). It participates in carbohydrate metabolism; galactose metabolism. Its function is as follows. Catalyzes the transfer of the gamma-phosphate of ATP to D-galactose to form alpha-D-galactose-1-phosphate (Gal-1-P). The sequence is that of Galactokinase from Roseiflexus sp. (strain RS-1).